Reading from the N-terminus, the 222-residue chain is Charged multivesicular body protein 2a (222 aa).

The residue at position 1 (M1) is an N-acetylmethionine. Residues 12 to 53 adopt a coiled-coil conformation; it reads EELLRQNQRALNRAMRELDRERQKLETQEKKIIADIKKMAKQ. Residues 56 to 222 form an interaction with VPS4B region; that stretch reads MDAVRIMAKD…EERLKNLRRD (167 aa). The span at 179-188 shows a compositional bias: polar residues; that stretch reads LSNLPSTGGS. The disordered stretch occupies residues 179-198; it reads LSNLPSTGGSLSVAAGGKKA. S184 is modified (phosphoserine). The residue at position 185 (T185) is a Phosphothreonine. Phosphoserine occurs at positions 188, 190, and 203. Residues 195-222 adopt a coiled-coil conformation; sequence GKKAEATASALADADADLEERLKNLRRD. Residues 210-220 carry the MIT-interacting motif motif; it reads ADLEERLKNLR. The interaction with VTA1 stretch occupies residues 217-222; it reads KNLRRD.

This sequence belongs to the SNF7 family. As to quaternary structure, probable core component of the endosomal sorting required for transport complex III (ESCRT-III). ESCRT-III components are thought to multimerize to form a flat lattice on the perimeter membrane of the endosome. Several assembly forms of ESCRT-III may exist that interact and act sequentially. In vitro, heteromerizes with CHMP3 (but not CHMP4) to form helical tubular structures that expose membrane-interacting sites on the outside whereas VPS4B can associate on the inside of the tubule. Interacts with CHMP1B, CHMP2B, CHMP3, CHMP4A, CHMP4B, CHMP4C and CHMP5. Interacts with VPS4A; the interaction is direct. Interacts with VPS4B; the interaction is direct. Interacts with MITD1. Interacts with VTA1; the interaction probably involves the open conformation of CHMP2A. ISGylated in a CHMP5-dependent manner. Isgylation weakens and inhibits its interactions with VPS4A and VTA1 respectively. Widely expressed. Highly expressed in brain, heart, liver and kidney.

The protein localises to the late endosome membrane. It localises to the cytoplasm. It is found in the nucleus envelope. In terms of biological role, probable core component of the endosomal sorting required for transport complex III (ESCRT-III) which is involved in multivesicular bodies (MVBs) formation and sorting of endosomal cargo proteins into MVBs. MVBs contain intraluminal vesicles (ILVs) that are generated by invagination and scission from the limiting membrane of the endosome and mostly are delivered to lysosomes enabling degradation of membrane proteins, such as stimulated growth factor receptors, lysosomal enzymes and lipids. The MVB pathway appears to require the sequential function of ESCRT-O, -I,-II and -III complexes. ESCRT-III proteins mostly dissociate from the invaginating membrane before the ILV is released. The ESCRT machinery also functions in topologically equivalent membrane fission events, such as the terminal stages of cytokinesis. Together with SPAST, the ESCRT-III complex promotes nuclear envelope sealing and mitotic spindle disassembly during late anaphase. Recruited to the reforming nuclear envelope (NE) during anaphase by LEMD2. ESCRT-III proteins are believed to mediate the necessary vesicle extrusion and/or membrane fission activities, possibly in conjunction with the AAA ATPase VPS4. The polypeptide is Charged multivesicular body protein 2a (Chmp2a) (Mus musculus (Mouse)).